The following is a 181-amino-acid chain: Adenine phosphoribosyltransferase (181 aa).

The protein belongs to the purine/pyrimidine phosphoribosyltransferase family. In terms of assembly, homodimer.

The protein localises to the cytoplasm. The catalysed reaction is AMP + diphosphate = 5-phospho-alpha-D-ribose 1-diphosphate + adenine. Its pathway is purine metabolism; AMP biosynthesis via salvage pathway; AMP from adenine: step 1/1. Its function is as follows. Catalyzes a salvage reaction resulting in the formation of AMP, that is energically less costly than de novo synthesis. This is Adenine phosphoribosyltransferase from Brucella anthropi (strain ATCC 49188 / DSM 6882 / CCUG 24695 / JCM 21032 / LMG 3331 / NBRC 15819 / NCTC 12168 / Alc 37) (Ochrobactrum anthropi).